Here is a 99-residue protein sequence, read N- to C-terminus: Aspartyl/glutamyl-tRNA(Asn/Gln) amidotransferase subunit C (99 aa).

Belongs to the GatC family. As to quaternary structure, heterotrimer of A, B and C subunits.

It carries out the reaction L-glutamyl-tRNA(Gln) + L-glutamine + ATP + H2O = L-glutaminyl-tRNA(Gln) + L-glutamate + ADP + phosphate + H(+). The enzyme catalyses L-aspartyl-tRNA(Asn) + L-glutamine + ATP + H2O = L-asparaginyl-tRNA(Asn) + L-glutamate + ADP + phosphate + 2 H(+). Its function is as follows. Allows the formation of correctly charged Asn-tRNA(Asn) or Gln-tRNA(Gln) through the transamidation of misacylated Asp-tRNA(Asn) or Glu-tRNA(Gln) in organisms which lack either or both of asparaginyl-tRNA or glutaminyl-tRNA synthetases. The reaction takes place in the presence of glutamine and ATP through an activated phospho-Asp-tRNA(Asn) or phospho-Glu-tRNA(Gln). This chain is Aspartyl/glutamyl-tRNA(Asn/Gln) amidotransferase subunit C, found in Corynebacterium glutamicum (strain R).